Here is a 393-residue protein sequence, read N- to C-terminus: S-adenosylmethionine synthase 2 (393 aa).

Glutamate 9 contacts Mg(2+). Histidine 15 is an ATP binding site. A K(+)-binding site is contributed by glutamate 43. L-methionine is bound by residues glutamate 56 and glutamine 99. ATP contacts are provided by residues 167–169, 235–238, aspartate 246, 252–253, alanine 269, lysine 273, and lysine 277; these read DGK, SGRF, and RK. L-methionine is bound at residue aspartate 246. Lysine 277 is an L-methionine binding site.

This sequence belongs to the AdoMet synthase family. Homotetramer. Mn(2+) serves as cofactor. It depends on Mg(2+) as a cofactor. Requires Co(2+) as cofactor. K(+) is required as a cofactor. As to expression, roots and shoots.

The protein localises to the cytoplasm. The catalysed reaction is L-methionine + ATP + H2O = S-adenosyl-L-methionine + phosphate + diphosphate. It functions in the pathway amino-acid biosynthesis; S-adenosyl-L-methionine biosynthesis; S-adenosyl-L-methionine from L-methionine: step 1/1. In terms of biological role, catalyzes the formation of S-adenosylmethionine from methionine and ATP. The reaction comprises two steps that are both catalyzed by the same enzyme: formation of S-adenosylmethionine (AdoMet) and triphosphate, and subsequent hydrolysis of the triphosphate. The sequence is that of S-adenosylmethionine synthase 2 (SAMS2) from Pinus contorta (Shore pine).